A 4249-amino-acid chain; its full sequence is Fibrocystin-L (4249 aa).

A signal peptide spans 1 to 20 (MGHLWLSGTWFLFGLLWCAA). Residues 21-4222 (DSHKGSSETI…TPVQTLAVIT (4202 aa)) are Extracellular-facing. IPT/TIG domains follow at residues 31–132 (PKVT…GVAS), 146–255 (PTIR…KMTY), 270–361 (PEVV…ILEY), 1067–1153 (PLIL…HFIY), 1155–1234 (SQIS…SFSY), 1240–1323 (PVVT…KLNA), 1329–1468 (LEVI…SFSY), 1565–1648 (PSII…TLTK), 1658–1742 (PNID…SFSY), 1748–1827 (PYVT…NLTI), 1830–1909 (PAVA…SFTY), 1915–1996 (PFLK…AFEY), 1998–2084 (LSIQ…LFTY), and 2090–2175 (PLIT…DFLY). A PA14 domain is found at 337 to 492 (PGGRGLKVEV…NVFTEQQTGD (156 aa)). Residues T1297 and T1359 are each glycosylated (O-linked (GalNAc...) threonine). T1838 is a glycosylation site (O-linked (GalNAc...) threonine). Residues 2183–2303 (SSWGGSPPPE…IPVVWTRLTH (121 aa)) form the G8 1 domain. 5 PbH1 repeats span residues 2484–2506 (QFKS…TIHN), 2507–2529 (THHL…FIED), 2565–2587 (NPNN…WYRM), 2664–2686 (GGAL…ETKR), and 2732–2755 (SQGL…ALGV). A G8 2 domain is found at 3035-3173 (SFWQSSPENN…HSVYKTKLLE (139 aa)). 5 PbH1 repeats span residues 3292–3314 (KGNA…RDST), 3354–3376 (TDGV…RIWG), 3415–3437 (GTNT…RIDG), 3470–3492 (PGCS…YFQT), and 3493–3514 (TESV…FSMV). T3735 is a glycosylation site (O-linked (GalNAc...) threonine). The disordered stretch occupies residues 4183–4208 (LSAQSVPGGSGSSPGSGSSSSGHSKA). A compositionally biased stretch (low complexity) spans 4197-4208 (GSGSSSSGHSKA). Residues 4223-4243 (ACLVGRLLLLEVFMAAVFILN) traverse the membrane as a helical segment. Residues 4244-4249 (TTVGIN) lie on the Cytoplasmic side of the membrane.

In terms of tissue distribution, expressed in neurons in the hippocampus and the cerebral cortex (at protein level). Transiently expressed at high levels in inner ear hair cells, predominantly in outer hair cells, during early postnatal development (at protein level).

It localises to the membrane. The protein resides in the cell projection. The protein localises to the stereocilium membrane. In terms of biological role, component of hair-cell stereocilia coat. Required for normal hearing. The chain is Fibrocystin-L (Pkhd1l1) from Mus musculus (Mouse).